A 152-amino-acid polypeptide reads, in one-letter code: Ubiquitin-conjugating enzyme E2 2 (152 aa).

A UBC core domain is found at 4–150 (PARKRLMRDF…VREVVEQSWT (147 aa)). Cys88 acts as the Glycyl thioester intermediate in catalysis.

Belongs to the ubiquitin-conjugating enzyme family. Expressed in all tissues examined. Lower levels found in leaves.

The enzyme catalyses S-ubiquitinyl-[E1 ubiquitin-activating enzyme]-L-cysteine + [E2 ubiquitin-conjugating enzyme]-L-cysteine = [E1 ubiquitin-activating enzyme]-L-cysteine + S-ubiquitinyl-[E2 ubiquitin-conjugating enzyme]-L-cysteine.. It functions in the pathway protein modification; protein ubiquitination. Its function is as follows. Accepts the ubiquitin from the E1 complex and catalyzes its covalent attachment to other proteins. This chain is Ubiquitin-conjugating enzyme E2 2 (UBC2), found in Arabidopsis thaliana (Mouse-ear cress).